The primary structure comprises 180 residues: Large ribosomal subunit protein mL41 (180 aa).

Residues 1–21 (MKLVLVSTRGVRSLNSTNFPA) constitute a mitochondrion transit peptide.

It belongs to the mitochondrion-specific ribosomal protein mL41 family. Component of the mitochondrial ribosome large subunit (39S) which comprises a 16S rRNA and about 50 distinct proteins.

The protein resides in the mitochondrion. The polypeptide is Large ribosomal subunit protein mL41 (mrpl-41) (Caenorhabditis elegans).